The following is a 76-amino-acid chain: Small ribosomal subunit protein bS18 (76 aa).

The protein belongs to the bacterial ribosomal protein bS18 family. As to quaternary structure, part of the 30S ribosomal subunit. Forms a tight heterodimer with protein bS6.

Binds as a heterodimer with protein bS6 to the central domain of the 16S rRNA, where it helps stabilize the platform of the 30S subunit. The protein is Small ribosomal subunit protein bS18 of Psychrobacter arcticus (strain DSM 17307 / VKM B-2377 / 273-4).